The chain runs to 22 residues: C-type natriuretic peptide (22 aa).

Cys6 and Cys22 form a disulfide bridge.

Belongs to the natriuretic peptide family.

Its subcellular location is the secreted. Hormone which plays a role in endochondral ossification through regulation of cartilaginous growth plate chondrocytes proliferation and differentiation. May also be vasoactive and natriuretic. Specifically binds and stimulates the cGMP production of the NPR2 receptor. Binds the clearance receptor NPR3. The sequence is that of C-type natriuretic peptide (NPPC) from Gallus gallus (Chicken).